A 128-amino-acid chain; its full sequence is Glyoxylase-like domain-containing protein (128 aa).

Residues 6–125 (QISGIEIPAT…EGNTHAICTR (120 aa)) enclose the VOC domain.

It participates in mycotoxin biosynthesis. Glyoxylase-like domain-containing protein; part of the gene cluster that mediates the biosynthesis of the selective antifungal agent ascochitine, an o-quinone methide that plays a possible protective role against other microbial competitors in nature and is considered to be important for pathogenicity of legume-associated Didymella species. The pathway probably begins with the synthesis of a keto-aldehyde intermediate by the ascochitine non-reducing polyketide synthase pksAC from successive condensations of 4 malonyl-CoA units, presumably with a simple acetyl-CoA starter unit. Release of the keto-aldehyde intermediate is consistent with the presence of the C-terminal reductive release domain. The HR-PKS (orf7) probably makes a diketide starter unit which is passed to the non-reducing polyketide synthase pksAC for further extension, producing ascochital and ascochitine. The aldehyde dehydrogenase (orf1), the 2-oxoglutarate-dependent dioxygenase (orf3) and the dehydrogenase (orf9) are probably involved in subsequent oxidations of methyl groups to the carboxylic acid of the heterocyclic ring. The ascochitine gene cluster also includes a gene encoding a short peptide with a cupin domain (orf2) that is often found in secondary metabolite gene clusters and which function has still to be determined. This chain is Glyoxylase-like domain-containing protein, found in Didymella fabae (Leaf and pod spot disease fungus).